Here is a 172-residue protein sequence, read N- to C-terminus: Adenine phosphoribosyltransferase (172 aa).

The protein belongs to the purine/pyrimidine phosphoribosyltransferase family. In terms of assembly, homodimer.

It localises to the cytoplasm. It carries out the reaction AMP + diphosphate = 5-phospho-alpha-D-ribose 1-diphosphate + adenine. It functions in the pathway purine metabolism; AMP biosynthesis via salvage pathway; AMP from adenine: step 1/1. Functionally, catalyzes a salvage reaction resulting in the formation of AMP, that is energically less costly than de novo synthesis. This chain is Adenine phosphoribosyltransferase, found in Streptococcus mutans serotype c (strain ATCC 700610 / UA159).